Reading from the N-terminus, the 1476-residue chain is ABC transporter G family member 17 (1476 aa).

Disordered stretches follow at residues 13–45 (SENNNNNNNNNNNNNNNNNNNLNNNNDNDYDYD) and 68–91 (FREIDGGKNNNNHDIELGERKPEN). The stretch at 14 to 67 (ENNNNNNNNNNNNNNNNNNNLNNNNDNDYDYDSINNIEEKFENVSKELEGQSIK) forms a coiled coil. The segment covering 15–39 (NNNNNNNNNNNNNNNNNNNLNNNND) has biased composition (low complexity). The ABC transporter 1 domain maps to 151–402 (LNPFNYFKKD…FLDLGFDCEP (252 aa)). Residues 507–751 (WGDKFTLTSR…SLSVKGENYL (245 aa)) form the ABC transmembrane type-2 1 domain. 5 helical membrane-spanning segments follow: residues 517–537 (FLTILVLSFIFGGIYFQQPLT), 547–567 (AIFTSIIFNCILTQGELHGAL), 592–612 (ILIDIPFILVQVFLHSFIVYF), 623–643 (FFIFCFTLVGVSLSSASLFRG), and 764–784 (LNVVVIFLFWLFYIGLNLFAV). Residues 838 to 1082 (FSWKSISYTV…LTSYFERHGV (245 aa)) enclose the ABC transporter 2 domain. 874 to 881 (GSSGAGKT) contacts ATP. The next 6 helical transmembrane spans lie at 1182-1202 (FYTMGSFAQSAVSGLVIGFTF), 1219-1239 (SWEAMILGVLLIYLVLPMFFI), 1260-1280 (LSMIAVEIPYVVLSSTLFFIA), 1298-1318 (WLMHTMFSVYIVSFAQALGAA), 1322-1342 (IAISIAALPIVLFYLFLLCGV), and 1450-1470 (FGIIVAYWGSSILAVLFFVYL). One can recognise an ABC transmembrane type-2 2 domain in the interval 1182-1405 (FYTMGSFAQS…TDCQTYSAPF (224 aa)).

The protein belongs to the ABC transporter superfamily. ABCG family. PDR (TC 3.A.1.205) subfamily.

It is found in the membrane. This is ABC transporter G family member 17 (abcG17-1) from Dictyostelium discoideum (Social amoeba).